Reading from the N-terminus, the 363-residue chain is 3-isopropylmalate dehydrogenase (363 aa).

79–92 (GPKWEHLPPNDQPE) contacts NAD(+). Substrate contacts are provided by Arg100, Arg110, Arg139, and Asp228. Mg(2+)-binding residues include Asp228, Asp252, and Asp256. Residue 286-298 (GSAPDIAGKNIAN) coordinates NAD(+).

Belongs to the isocitrate and isopropylmalate dehydrogenases family. LeuB type 1 subfamily. As to quaternary structure, homodimer. It depends on Mg(2+) as a cofactor. Requires Mn(2+) as cofactor.

Its subcellular location is the cytoplasm. It carries out the reaction (2R,3S)-3-isopropylmalate + NAD(+) = 4-methyl-2-oxopentanoate + CO2 + NADH. It functions in the pathway amino-acid biosynthesis; L-leucine biosynthesis; L-leucine from 3-methyl-2-oxobutanoate: step 3/4. Its function is as follows. Catalyzes the oxidation of 3-carboxy-2-hydroxy-4-methylpentanoate (3-isopropylmalate) to 3-carboxy-4-methyl-2-oxopentanoate. The product decarboxylates to 4-methyl-2 oxopentanoate. The sequence is that of 3-isopropylmalate dehydrogenase from Vibrio parahaemolyticus serotype O3:K6 (strain RIMD 2210633).